The following is a 204-amino-acid chain: uncharacterized protein (204 aa).

Residues 63-83 (SLLLSMVASVTAAGGNAAIVG) form a helical membrane-spanning segment.

It is found in the membrane. This is an uncharacterized protein from Mycobacterium tuberculosis (strain ATCC 25618 / H37Rv).